The primary structure comprises 190 residues: Crossover junction endodeoxyribonuclease RuvC (190 aa).

Residues Asp-8, Glu-67, and Asp-139 contribute to the active site. Asp-8, Glu-67, and Asp-139 together coordinate Mg(2+).

The protein belongs to the RuvC family. As to quaternary structure, homodimer which binds Holliday junction (HJ) DNA. The HJ becomes 2-fold symmetrical on binding to RuvC with unstacked arms; it has a different conformation from HJ DNA in complex with RuvA. In the full resolvosome a probable DNA-RuvA(4)-RuvB(12)-RuvC(2) complex forms which resolves the HJ. Mg(2+) is required as a cofactor.

The protein localises to the cytoplasm. The catalysed reaction is Endonucleolytic cleavage at a junction such as a reciprocal single-stranded crossover between two homologous DNA duplexes (Holliday junction).. Functionally, the RuvA-RuvB-RuvC complex processes Holliday junction (HJ) DNA during genetic recombination and DNA repair. Endonuclease that resolves HJ intermediates. Cleaves cruciform DNA by making single-stranded nicks across the HJ at symmetrical positions within the homologous arms, yielding a 5'-phosphate and a 3'-hydroxyl group; requires a central core of homology in the junction. The consensus cleavage sequence is 5'-(A/T)TT(C/G)-3'. Cleavage occurs on the 3'-side of the TT dinucleotide at the point of strand exchange. HJ branch migration catalyzed by RuvA-RuvB allows RuvC to scan DNA until it finds its consensus sequence, where it cleaves and resolves the cruciform DNA. The protein is Crossover junction endodeoxyribonuclease RuvC of Actinobacillus succinogenes (strain ATCC 55618 / DSM 22257 / CCUG 43843 / 130Z).